Reading from the N-terminus, the 470-residue chain is Glucose-1-phosphate adenylyltransferase (470 aa).

Residues Gly164, 181–182 (EK), and Ser199 contribute to the alpha-D-glucose 1-phosphate site.

The protein belongs to the bacterial/plant glucose-1-phosphate adenylyltransferase family. As to quaternary structure, homotetramer.

The catalysed reaction is alpha-D-glucose 1-phosphate + ATP + H(+) = ADP-alpha-D-glucose + diphosphate. It participates in glycan biosynthesis; glycogen biosynthesis. Its function is as follows. Involved in the biosynthesis of ADP-glucose, a building block required for the elongation reactions to produce glycogen. Catalyzes the reaction between ATP and alpha-D-glucose 1-phosphate (G1P) to produce pyrophosphate and ADP-Glc. In Pseudarthrobacter chlorophenolicus (strain ATCC 700700 / DSM 12829 / CIP 107037 / JCM 12360 / KCTC 9906 / NCIMB 13794 / A6) (Arthrobacter chlorophenolicus), this protein is Glucose-1-phosphate adenylyltransferase.